The chain runs to 188 residues: ATP-dependent protease subunit HslV (188 aa).

T14 is a catalytic residue. The Na(+) site is built by A173, C176, and T179.

The protein belongs to the peptidase T1B family. HslV subfamily. A double ring-shaped homohexamer of HslV is capped on each side by a ring-shaped HslU homohexamer. The assembly of the HslU/HslV complex is dependent on binding of ATP.

Its subcellular location is the cytoplasm. The enzyme catalyses ATP-dependent cleavage of peptide bonds with broad specificity.. With respect to regulation, allosterically activated by HslU binding. Functionally, protease subunit of a proteasome-like degradation complex believed to be a general protein degrading machinery. This chain is ATP-dependent protease subunit HslV, found in Caulobacter vibrioides (strain ATCC 19089 / CIP 103742 / CB 15) (Caulobacter crescentus).